Consider the following 241-residue polypeptide: Dolichol-phosphate mannosyltransferase subunit 1 (241 aa).

Pro-13, Tyr-15, Glu-17, Ile-44, Asp-46, Asp-99, Ala-100, Asp-101, Arg-128, Arg-215, and Lys-221 together coordinate GDP-alpha-D-mannose. Asp-101 lines the Mg(2+) pocket. A Mn(2+)-binding site is contributed by Asp-101.

Belongs to the glycosyltransferase 2 family. It depends on Mg(2+) as a cofactor. Requires Mn(2+) as cofactor. The cofactor is Ca(2+).

Its subcellular location is the endoplasmic reticulum. It carries out the reaction a di-trans,poly-cis-dolichyl phosphate + GDP-alpha-D-mannose = a di-trans,poly-cis-dolichyl beta-D-mannosyl phosphate + GDP. It functions in the pathway protein modification; protein glycosylation. Functionally, transfers mannose from GDP-mannose to dolichol monophosphate to form dolichol phosphate mannose (Dol-P-Man) which is the mannosyl donor in pathways leading to N-glycosylation, glycosyl phosphatidylinositol membrane anchoring, and O-mannosylation of proteins. This Drosophila melanogaster (Fruit fly) protein is Dolichol-phosphate mannosyltransferase subunit 1.